The following is a 103-amino-acid chain: UPF0132 membrane protein AF_0105 (103 aa).

3 helical membrane-spanning segments follow: residues 5–25 (VAGA…LLME), 35–55 (AMQS…LSFI), and 58–78 (IGVL…LVCI).

It belongs to the UPF0132 family.

It localises to the cell membrane. This is UPF0132 membrane protein AF_0105 from Archaeoglobus fulgidus (strain ATCC 49558 / DSM 4304 / JCM 9628 / NBRC 100126 / VC-16).